Consider the following 94-residue polypeptide: Pyrimidine/purine nucleoside phosphorylase (94 aa).

Belongs to the nucleoside phosphorylase PpnP family.

The catalysed reaction is a purine D-ribonucleoside + phosphate = a purine nucleobase + alpha-D-ribose 1-phosphate. The enzyme catalyses adenosine + phosphate = alpha-D-ribose 1-phosphate + adenine. It catalyses the reaction cytidine + phosphate = cytosine + alpha-D-ribose 1-phosphate. It carries out the reaction guanosine + phosphate = alpha-D-ribose 1-phosphate + guanine. The catalysed reaction is inosine + phosphate = alpha-D-ribose 1-phosphate + hypoxanthine. The enzyme catalyses thymidine + phosphate = 2-deoxy-alpha-D-ribose 1-phosphate + thymine. It catalyses the reaction uridine + phosphate = alpha-D-ribose 1-phosphate + uracil. It carries out the reaction xanthosine + phosphate = alpha-D-ribose 1-phosphate + xanthine. In terms of biological role, catalyzes the phosphorolysis of diverse nucleosides, yielding D-ribose 1-phosphate and the respective free bases. Can use uridine, adenosine, guanosine, cytidine, thymidine, inosine and xanthosine as substrates. Also catalyzes the reverse reactions. This is Pyrimidine/purine nucleoside phosphorylase from Pseudomonas putida (strain ATCC 700007 / DSM 6899 / JCM 31910 / BCRC 17059 / LMG 24140 / F1).